The chain runs to 459 residues: Glycosyl hydrolase family 109 protein (459 aa).

The segment at residues 1–31 (MHNIHRRNFLKAAGAATAGLVTANIALNAYA) is a signal peptide (tat-type signal). NAD(+)-binding positions include 64–65 (ER), Asp-86, 135–138 (WEWH), 155–156 (EV), and Asn-184. Residues Tyr-213, Arg-232, 244-247 (YPTH), and Tyr-326 each bind substrate. Tyr-244 is a binding site for NAD(+).

Belongs to the Gfo/Idh/MocA family. Glycosyl hydrolase 109 subfamily. Requires NAD(+) as cofactor. In terms of processing, predicted to be exported by the Tat system. The position of the signal peptide cleavage has not been experimentally proven.

Functionally, glycosidase. The chain is Glycosyl hydrolase family 109 protein from Shewanella baltica (strain OS195).